The following is a 297-amino-acid chain: 3-mercaptopyruvate sulfurtransferase (297 aa).

A2 carries the N-acetylalanine modification. A phosphoserine mark is found at S3, W15, P23, and S35. Residues 25-144 (AGQPLQLLDA…WLRQNLPLSS (120 aa)) form the Rhodanese 1 domain. K40 carries the post-translational modification N6-acetyllysine; alternate. K40 bears the N6-succinyllysine; alternate mark. A hinge region spans residues 145 to 160 (GKSQPAPAEFRAQLDP). An N6-succinyllysine mark is found at K146 and K164. One can recognise a Rhodanese 2 domain in the interval 174 to 288 (ESRRFQVVDS…WYMRARPEDV (115 aa)). R188 contacts substrate. Catalysis depends on C248, which acts as the Cysteine persulfide intermediate.

In terms of assembly, monomer (active form). Homodimer; disulfide-linked (inactive form).

It localises to the cytoplasm. The protein resides in the mitochondrion. The protein localises to the synapse. Its subcellular location is the synaptosome. The catalysed reaction is 2-oxo-3-sulfanylpropanoate + [thioredoxin]-dithiol = [thioredoxin]-disulfide + hydrogen sulfide + pyruvate + H(+). With respect to regulation, by oxidative stress, and thioredoxin. Under oxidative stress conditions, the catalytic cysteine site is converted to a sulfenate which inhibits the MPST enzyme activity. Reduced thioredoxin cleaves an intersubunit disulfide bond to turn on the redox switch and reactivate the enzyme. Functionally, transfer of a sulfur ion to cyanide or to other thiol compounds. Also has weak rhodanese activity. Detoxifies cyanide and is required for thiosulfate biosynthesis. Acts as an antioxidant. In combination with cysteine aminotransferase (CAT), contributes to the catabolism of cysteine and is an important producer of hydrogen sulfide in the brain, retina and vascular endothelial cells. Hydrogen sulfide H(2)S is an important synaptic modulator, signaling molecule, smooth muscle contractor and neuroprotectant. Its production by the 3MST/CAT pathway is regulated by calcium ions. This Homo sapiens (Human) protein is 3-mercaptopyruvate sulfurtransferase (MPST).